The primary structure comprises 252 residues: Chitooligosaccharide deacetylase (252 aa).

Residues H61 and H125 each contribute to the Mg(2+) site.

It belongs to the YdjC deacetylase family. ChbG subfamily. Homodimer. Mg(2+) is required as a cofactor.

The protein localises to the cytoplasm. It carries out the reaction N,N'-diacetylchitobiose + H2O = N-acetyl-beta-D-glucosaminyl-(1-&gt;4)-D-glucosamine + acetate. It catalyses the reaction diacetylchitobiose-6'-phosphate + H2O = N'-monoacetylchitobiose-6'-phosphate + acetate. It participates in glycan degradation; chitin degradation. In terms of biological role, involved in the degradation of chitin. ChbG is essential for growth on the acetylated chitooligosaccharides chitobiose and chitotriose but is dispensable for growth on cellobiose and chitosan dimer, the deacetylated form of chitobiose. Deacetylation of chitobiose-6-P and chitotriose-6-P is necessary for both the activation of the chb promoter by the regulatory protein ChbR and the hydrolysis of phosphorylated beta-glucosides by the phospho-beta-glucosidase ChbF. Catalyzes the removal of only one acetyl group from chitobiose-6-P to yield monoacetylchitobiose-6-P, the inducer of ChbR and the substrate of ChbF. The chain is Chitooligosaccharide deacetylase from Salmonella paratyphi A (strain ATCC 9150 / SARB42).